Consider the following 445-residue polypeptide: Tubulin beta-1 chain (445 aa).

GTP contacts are provided by Gln-11, Glu-69, Ser-138, Gly-142, Thr-143, Gly-144, Asn-204, and Asn-226. Residue Glu-69 participates in Mg(2+) binding. The tract at residues 422-445 (QYQDAGMDDEYGEEYEDEAPAEEE) is disordered. A compositionally biased stretch (acidic residues) spans 427 to 445 (GMDDEYGEEYEDEAPAEEE).

It belongs to the tubulin family. As to quaternary structure, dimer of alpha and beta chains. A typical microtubule is a hollow water-filled tube with an outer diameter of 25 nm and an inner diameter of 15 nM. Alpha-beta heterodimers associate head-to-tail to form protofilaments running lengthwise along the microtubule wall with the beta-tubulin subunit facing the microtubule plus end conferring a structural polarity. Microtubules usually have 13 protofilaments but different protofilament numbers can be found in some organisms and specialized cells. It depends on Mg(2+) as a cofactor.

The protein resides in the cytoplasm. Its subcellular location is the cytoskeleton. Tubulin is the major constituent of microtubules, a cylinder consisting of laterally associated linear protofilaments composed of alpha- and beta-tubulin heterodimers. Microtubules grow by the addition of GTP-tubulin dimers to the microtubule end, where a stabilizing cap forms. Below the cap, tubulin dimers are in GDP-bound state, owing to GTPase activity of alpha-tubulin. The chain is Tubulin beta-1 chain (TUB1) from Colletotrichum graminicola (Maize anthracnose fungus).